A 105-amino-acid polypeptide reads, in one-letter code: MKAVITLLFLACILVVTYGDLICGTNYCKDHPCTSPIARASCRSPATYRANHSGKCACCPACVTLLRERAACKTYSKEIGETPSAVCQEPLKCLNGVCTKVTPRR.

An N-terminal signal peptide occupies residues 1–19; sequence MKAVITLLFLACILVVTYG. 6 disulfide bridges follow: Cys-23–Cys-56, Cys-28–Cys-58, Cys-33–Cys-59, Cys-42–Cys-62, Cys-72–Cys-93, and Cys-87–Cys-98.

Inhibits proteases from the fungi A.oryzae and R.oryzae, trypsin and chymotrypsin. Does not inhibit protease from the bacterium B.licheniformis or papain. The polypeptide is Fungal protease inhibitor-1 (Antheraea mylitta (Tasar silkworm)).